A 781-amino-acid polypeptide reads, in one-letter code: Putative UPF0313 protein YPO0674/y3502/YP_2990 (781 aa).

One can recognise a Radical SAM core domain in the interval 368-646 (AYDMIRFSIN…KALLRYHDPA (279 aa)). 3 residues coordinate [4Fe-4S] cluster: cysteine 382, cysteine 386, and cysteine 389. Positions 681 to 781 (REARRALRHH…AGSRGKNRQH (101 aa)) are disordered. A compositionally biased stretch (polar residues) spans 696–708 (KHTSITRQRQPSN). Residues 726–750 (TSSAHSTSANQSTSANQSTSAAHST) are compositionally biased toward low complexity.

This sequence belongs to the UPF0313 family. It depends on [4Fe-4S] cluster as a cofactor.

The protein is Putative UPF0313 protein YPO0674/y3502/YP_2990 of Yersinia pestis.